We begin with the raw amino-acid sequence, 147 residues long: uncharacterized protein (147 aa).

The region spanning 1–147 (MEIRRADKDD…RPESGGSGSE (147 aa)) is the N-acetyltransferase domain.

Belongs to the acetyltransferase family.

This is an uncharacterized protein from Archaeoglobus fulgidus (strain ATCC 49558 / DSM 4304 / JCM 9628 / NBRC 100126 / VC-16).